We begin with the raw amino-acid sequence, 339 residues long: Undecaprenyl-phosphate 4-deoxy-4-formamido-L-arabinose transferase (339 aa).

2 helical membrane-spanning segments follow: residues 235–255 (LSIIGFGMAGLGALFALMLIV) and 270–290 (FVLFAVLFVFTGGQFIGMGLL).

This sequence belongs to the glycosyltransferase 2 family.

The protein localises to the cell inner membrane. The enzyme catalyses UDP-4-deoxy-4-formamido-beta-L-arabinose + di-trans,octa-cis-undecaprenyl phosphate = 4-deoxy-4-formamido-alpha-L-arabinopyranosyl di-trans,octa-cis-undecaprenyl phosphate + UDP. It participates in glycolipid biosynthesis; 4-amino-4-deoxy-alpha-L-arabinose undecaprenyl phosphate biosynthesis; 4-amino-4-deoxy-alpha-L-arabinose undecaprenyl phosphate from UDP-4-deoxy-4-formamido-beta-L-arabinose and undecaprenyl phosphate: step 1/2. Its pathway is bacterial outer membrane biogenesis; lipopolysaccharide biosynthesis. In terms of biological role, catalyzes the transfer of 4-deoxy-4-formamido-L-arabinose from UDP to undecaprenyl phosphate. The modified arabinose is attached to lipid A and is required for resistance to polymyxin and cationic antimicrobial peptides. This is Undecaprenyl-phosphate 4-deoxy-4-formamido-L-arabinose transferase from Pseudomonas fluorescens (strain ATCC BAA-477 / NRRL B-23932 / Pf-5).